Reading from the N-terminus, the 121-residue chain is Nitrogenase-stabilizing/protective protein NifW (121 aa).

It belongs to the NifW family. Homotrimer; associates with NifD.

Functionally, may protect the nitrogenase Fe-Mo protein from oxidative damage. In Leptothrix cholodnii (strain ATCC 51168 / LMG 8142 / SP-6) (Leptothrix discophora (strain SP-6)), this protein is Nitrogenase-stabilizing/protective protein NifW.